Reading from the N-terminus, the 1130-residue chain is ABC transporter ATM1 (1130 aa).

Residues 1-65 (MQPPTRAPFF…ESFHSSAFQL (65 aa)) constitute a mitochondrion transit peptide. Disordered regions lie at residues 191–212 (DAWT…CVRP), 276–315 (HHAP…RNMS), and 341–385 (STFS…TSSP). 2 stretches are compositionally biased toward polar residues: residues 195–206 (SGCSGQTDNATA) and 305–315 (GSLTLSPRNMS). A helical transmembrane segment spans residues 406-426 (PNPTSLQLLFSLFPFLWPTAL). Positions 468-502 (PLSPSGASPSSGDTSLLASSGETSSSLSPSAAPAE) are enriched in low complexity. Positions 468–554 (PLSPSGASPS…AGKAGTSVGG (87 aa)) are disordered. Basic and acidic residues predominate over residues 503 to 523 (GAREAGKSGESAGRERRDEGS). Transmembrane regions (helical) follow at residues 574-594 (IVSV…AATG), 653-673 (VLLF…YLLG), 678-698 (GPVA…TAAV), 761-781 (LAFL…GSLA), and 791-811 (LLPV…AVPL). An ABC transmembrane type-1 domain is found at 587–823 (VARIAATGFN…VGTIYRETSL (237 aa)). The ABC transporter domain maps to 857-1111 (VAFENVRFAY…ERGLYRALWE (255 aa)). 910–917 (GPSGVGKS) contacts ATP.

The protein belongs to the ABC transporter superfamily. ABCB family. Heavy Metal importer (TC 3.A.1.210) subfamily. As to quaternary structure, homodimer.

Its subcellular location is the mitochondrion membrane. Functionally, probably transports iron-sulfur clusters in an ATP-dependent manner. Plays a role in [Fe-S] proteins homeostasis. Required for optimal parasite growth and lytic cycle. The chain is ABC transporter ATM1 from Toxoplasma gondii (strain ATCC 50611 / Me49).